A 223-amino-acid chain; its full sequence is UPF0173 metal-dependent hydrolase TV0864 (223 aa).

It belongs to the UPF0173 family.

This Thermoplasma volcanium (strain ATCC 51530 / DSM 4299 / JCM 9571 / NBRC 15438 / GSS1) protein is UPF0173 metal-dependent hydrolase TV0864.